We begin with the raw amino-acid sequence, 326 residues long: Phospho-N-acetylmuramoyl-pentapeptide-transferase (326 aa).

9 consecutive transmembrane segments (helical) span residues 3–23 (ISIS…PAFI), 51–71 (TMGG…VALF), 79–99 (VGMI…DDFL), 115–135 (LALQ…GGDM), 138–158 (IFGY…FWLV), 169–189 (GIDG…GVIA), 195–215 (MDIL…FVFN), 221–243 (VFMG…MALH), and 304–324 (VDFF…AILY).

This sequence belongs to the glycosyltransferase 4 family. MraY subfamily. Mg(2+) is required as a cofactor.

The protein resides in the cell membrane. It carries out the reaction UDP-N-acetyl-alpha-D-muramoyl-L-alanyl-gamma-D-glutamyl-L-lysyl-D-alanyl-D-alanine + di-trans,octa-cis-undecaprenyl phosphate = Mur2Ac(oyl-L-Ala-gamma-D-Glu-L-Lys-D-Ala-D-Ala)-di-trans,octa-cis-undecaprenyl diphosphate + UMP. It participates in cell wall biogenesis; peptidoglycan biosynthesis. In terms of biological role, catalyzes the initial step of the lipid cycle reactions in the biosynthesis of the cell wall peptidoglycan: transfers peptidoglycan precursor phospho-MurNAc-pentapeptide from UDP-MurNAc-pentapeptide onto the lipid carrier undecaprenyl phosphate, yielding undecaprenyl-pyrophosphoryl-MurNAc-pentapeptide, known as lipid I. The sequence is that of Phospho-N-acetylmuramoyl-pentapeptide-transferase from Streptococcus pneumoniae (strain Hungary19A-6).